Consider the following 267-residue polypeptide: Acyl-[acyl-carrier-protein]--UDP-N-acetylglucosamine O-acyltransferase (267 aa).

The protein belongs to the transferase hexapeptide repeat family. LpxA subfamily. As to quaternary structure, homotrimer.

The protein resides in the cytoplasm. The catalysed reaction is a (3R)-hydroxyacyl-[ACP] + UDP-N-acetyl-alpha-D-glucosamine = a UDP-3-O-[(3R)-3-hydroxyacyl]-N-acetyl-alpha-D-glucosamine + holo-[ACP]. Its pathway is glycolipid biosynthesis; lipid IV(A) biosynthesis; lipid IV(A) from (3R)-3-hydroxytetradecanoyl-[acyl-carrier-protein] and UDP-N-acetyl-alpha-D-glucosamine: step 1/6. In terms of biological role, involved in the biosynthesis of lipid A, a phosphorylated glycolipid that anchors the lipopolysaccharide to the outer membrane of the cell. The sequence is that of Acyl-[acyl-carrier-protein]--UDP-N-acetylglucosamine O-acyltransferase from Hamiltonella defensa subsp. Acyrthosiphon pisum (strain 5AT).